A 147-amino-acid chain; its full sequence is Protein SprT-like (147 aa).

The SprT-like domain occupies 9-142 (AKVKEISLTY…CGKCRGKLIL (134 aa)). Histidine 65 provides a ligand contact to Zn(2+). Residue glutamate 66 is part of the active site. Histidine 69 contacts Zn(2+).

It belongs to the SprT family. Zn(2+) is required as a cofactor.

It is found in the cytoplasm. The sequence is that of Protein SprT-like (yciD) from Lactococcus lactis subsp. lactis (strain IL1403) (Streptococcus lactis).